A 102-amino-acid chain; its full sequence is RNA-binding protein Hfq (102 aa).

One can recognise a Sm domain in the interval Asp9–Val68. The segment at Val63–Glu102 is disordered. Over residues His70 to Asn88 the composition is skewed to low complexity.

The protein belongs to the Hfq family. Homohexamer.

Functionally, RNA chaperone that binds small regulatory RNA (sRNAs) and mRNAs to facilitate mRNA translational regulation in response to envelope stress, environmental stress and changes in metabolite concentrations. Also binds with high specificity to tRNAs. This chain is RNA-binding protein Hfq, found in Salmonella heidelberg (strain SL476).